A 357-amino-acid polypeptide reads, in one-letter code: MNWVNKSVPQEFILLVFSDQPWLEIPPFVMFLFSYILTIFGNLTIILVSHVDFKLHTPMYFFLSNLSLLDLCYTTSTVPQMLVNICNTRKVISYGGCVAQLFIFLALGSTECLLLAVMCFDRFVAICRPLHYSIIMHQRLCFQLAAASWISGFSNSVLQSTWTLKMPLCGHKEVDHFFCEVPALLKLSCVDTTANEAELFFISVLFLLIPVTLILISYAFIVQAVLRIQSAEGQRKAFGTCGSHLIVVSLFYGTAISMYLQPPSPSSKDRGKMVSLFCGIIAPMLNPLIYTLRNKEVKEAFKRLVAKSLLNQEIRNMQMISFAKDTVLTYLTNFSASCPIFVITIENYCNLPQRKFP.

Residues 1–25 (MNWVNKSVPQEFILLVFSDQPWLEI) are Extracellular-facing. Asn-5 carries an N-linked (GlcNAc...) asparagine glycan. A helical membrane pass occupies residues 26–49 (PPFVMFLFSYILTIFGNLTIILVS). The Cytoplasmic segment spans residues 50 to 57 (HVDFKLHT). Residues 58–79 (PMYFFLSNLSLLDLCYTTSTVP) traverse the membrane as a helical segment. Residues 80–100 (QMLVNICNTRKVISYGGCVAQ) are Extracellular-facing. Residues Cys-97 and Cys-189 are joined by a disulfide bond. The chain crosses the membrane as a helical span at residues 101 to 120 (LFIFLALGSTECLLLAVMCF). Topologically, residues 121–139 (DRFVAICRPLHYSIIMHQR) are cytoplasmic. The chain crosses the membrane as a helical span at residues 140-158 (LCFQLAAASWISGFSNSVL). The Extracellular segment spans residues 159 to 195 (QSTWTLKMPLCGHKEVDHFFCEVPALLKLSCVDTTAN). Residues 196-219 (EAELFFISVLFLLIPVTLILISYA) traverse the membrane as a helical segment. The Cytoplasmic portion of the chain corresponds to 220–236 (FIVQAVLRIQSAEGQRK). A helical membrane pass occupies residues 237-259 (AFGTCGSHLIVVSLFYGTAISMY). Over 260–272 (LQPPSPSSKDRGK) the chain is Extracellular. A helical transmembrane segment spans residues 273-292 (MVSLFCGIIAPMLNPLIYTL). Over 293 to 357 (RNKEVKEAFK…YCNLPQRKFP (65 aa)) the chain is Cytoplasmic.

It belongs to the G-protein coupled receptor 1 family.

It is found in the cell membrane. Its function is as follows. Odorant receptor. The protein is Olfactory receptor 2B2 (OR2B2) of Homo sapiens (Human).